The chain runs to 489 residues: MGWKDAAEPVLSRMPAVARPEGHVPFRRKLGWTGGILVLYFFLTNVTLFGLDAATANDLFGQFRSILAGQQGSVLQLGIGPIVTASIVLQLLGGADLLGLDTDNNPRDQVLYQGLQKLLVGVMICLTGLPMVFAGNFLPADQAVATSLGIGTVGVKGLIFAQIAVGGVLILFMDEIVSKWGVGSGVGLFIIAGVSQQLVGGLFSWQGLGGTSGFFATWIGIITGAIELPASPTDLLSTVFLGQGQLLALITTLLIFGIVVYAESVRVEIPLSHARVKGARGRFPVKLIYASVLPMILVRALQANIQFLGRFLNSSWVGMPAWLGQYTSGQVTGGLLYYLAPIQSRSDWMWFLGLTSADPLDIAIRVLIDLIFMIVGGAVFAIFWVETTGMGPKSTAQQIQNSGMQIPGFRRNPQVIERVMERYIPQVTVIGGALVGLLAVMANMLGTIGAVSGTGLLLTVSITYKLYEEIAEEQLMEMHPMMRNMFGSE.

The Cytoplasmic portion of the chain corresponds to 1 to 20 (MGWKDAAEPVLSRMPAVARP). The helical transmembrane segment at 21 to 47 (EGHVPFRRKLGWTGGILVLYFFLTNVT) threads the bilayer. The Extracellular portion of the chain corresponds to 48 to 59 (LFGLDAATANDL). The segment at residues 60-67 (FGQFRSIL) is an intramembrane region (helical). A discontinuously helical transmembrane segment spans residues 60 to 88 (FGQFRSILAGQQGSVLQLGIGPIVTASIV). The stretch at 68–79 (AGQQGSVLQLGI) is an intramembrane region. Residues 80-88 (GPIVTASIV) constitute an intramembrane region (helical). The Cytoplasmic segment spans residues 89-110 (LQLLGGADLLGLDTDNNPRDQV). Residues 111–135 (LYQGLQKLLVGVMICLTGLPMVFAG) traverse the membrane as a helical segment. Residues 136-153 (NFLPADQAVATSLGIGTV) lie on the Extracellular side of the membrane. Residues 154–178 (GVKGLIFAQIAVGGVLILFMDEIVS) form a helical membrane-spanning segment. The Cytoplasmic segment spans residues 179 to 184 (KWGVGS). Residues 185-203 (GVGLFIIAGVSQQLVGGLF) traverse the membrane as a helical segment. The Extracellular segment spans residues 204 to 244 (SWQGLGGTSGFFATWIGIITGAIELPASPTDLLSTVFLGQG). The helical transmembrane segment at 245–266 (QLLALITTLLIFGIVVYAESVR) threads the bilayer. Over 267-291 (VEIPLSHARVKGARGRFPVKLIYAS) the chain is Cytoplasmic. A helical transmembrane segment spans residues 292 to 313 (VLPMILVRALQANIQFLGRFLN). The Extracellular segment spans residues 314–364 (SSWVGMPAWLGQYTSGQVTGGLLYYLAPIQSRSDWMWFLGLTSADPLDIAI). The helical transmembrane segment at 365-384 (RVLIDLIFMIVGGAVFAIFW) threads the bilayer. At 385–427 (VETTGMGPKSTAQQIQNSGMQIPGFRRNPQVIERVMERYIPQV) the chain is on the cytoplasmic side. The chain crosses the membrane as a helical span at residues 428–446 (TVIGGALVGLLAVMANMLG). Residues 447–450 (TIGA) lie on the Extracellular side of the membrane. The chain crosses the membrane as a helical span at residues 451 to 465 (VSGTGLLLTVSITYK). Topologically, residues 466-488 (LYEEIAEEQLMEMHPMMRNMFGS) are cytoplasmic.

It belongs to the SecY/SEC61-alpha family. In terms of assembly, component of the Sec protein translocase complex. Heterotrimer consisting of alpha (SecY), beta (SecG) and gamma (SecE) subunits. The heterotrimers can form oligomers, although 1 heterotrimer is thought to be able to translocate proteins. Interacts with the ribosome. May interact with SecDF, and other proteins may be involved.

It localises to the cell membrane. The central subunit of the protein translocation channel SecYEG. Consists of two halves formed by TMs 1-5 and 6-10. These two domains form a lateral gate at the front which open onto the bilayer between TMs 2 and 7, and are clamped together by SecE at the back. The channel is closed by both a pore ring composed of hydrophobic SecY resides and a short helix (helix 2A) on the extracellular side of the membrane which forms a plug. The plug probably moves laterally to allow the channel to open. The ring and the pore may move independently. The sequence is that of Protein translocase subunit SecY from Haloferax volcanii (strain ATCC 29605 / DSM 3757 / JCM 8879 / NBRC 14742 / NCIMB 2012 / VKM B-1768 / DS2) (Halobacterium volcanii).